The sequence spans 954 residues: Mycolic acid-containing lipids exporter MmpL11 (954 aa).

The next 12 helical transmembrane spans lie at 11–31, 188–208, 214–234, 235–255, 279–299, 312–334, 373–393, 529–549, 559–579, 597–617, 648–668, and 670–690; these read FRWA…YLAL, IVLI…LPLV, VVVT…SVFV, TSTV…FILM, GLAV…IYLI, ILAV…ATFG, AIAA…MVLG, TQPL…LVSI, VLMT…VFQW, IPPL…IFLL, AALI…PLVA, and LGVA…LVLV.

The protein resides in the cell inner membrane. In terms of biological role, contributes to cell wall biosynthesis and biofilm formation. Transports the mycolic acid-containing lipids monomeromycolyl diacylglycerol (MMDAG) and mycolate ester wax (WE) to the bacterial surface. This is Mycolic acid-containing lipids exporter MmpL11 from Mycolicibacterium smegmatis (strain ATCC 700084 / mc(2)155) (Mycobacterium smegmatis).